Reading from the N-terminus, the 237-residue chain is Phosphoribosylaminoimidazole-succinocarboxamide synthase (237 aa).

It belongs to the SAICAR synthetase family.

It catalyses the reaction 5-amino-1-(5-phospho-D-ribosyl)imidazole-4-carboxylate + L-aspartate + ATP = (2S)-2-[5-amino-1-(5-phospho-beta-D-ribosyl)imidazole-4-carboxamido]succinate + ADP + phosphate + 2 H(+). It participates in purine metabolism; IMP biosynthesis via de novo pathway; 5-amino-1-(5-phospho-D-ribosyl)imidazole-4-carboxamide from 5-amino-1-(5-phospho-D-ribosyl)imidazole-4-carboxylate: step 1/2. The chain is Phosphoribosylaminoimidazole-succinocarboxamide synthase from Baumannia cicadellinicola subsp. Homalodisca coagulata.